The following is an 887-amino-acid chain: Tiger protein O1 (887 aa).

An N-terminal signal peptide occupies residues 1–21 (MEKKLLIIVIVFLFSTIQVFC). Topologically, residues 22-845 (RIDDKTFVIS…SLSKKSIILL (824 aa)) are extracellular. Residues Asn32, Asn70, Asn186, Asn207, Asn219, Asn259, Asn297, Asn314, Asn325, Asn338, Asn354, Asn393, Asn431, Asn588, Asn629, Asn652, Asn687, Asn710, Asn720, Asn730, Asn775, Asn788, Asn811, and Asn816 are each glycosylated (N-linked (GlcNAc...) asparagine). An IPT/TIG 1 domain is found at 277–365 (NSVPYSKGGL…TNENKLLFNY (89 aa)). The IPT/TIG 2 domain occupies 710 to 767 (NTSSINVNGGNLTIYGKNFYNVSNIKVEVDNQLKCNKIEFINLNSLTCFLPPFIETLF). The disordered stretch occupies residues 811–835 (NDTSENSTNDILNHEKNNNNQKDGS). A helical membrane pass occupies residues 846–866 (SILLPSFIILIVSLAIVILVI). The Cytoplasmic segment spans residues 867 to 887 (KRNKTKHSKNMSSKEKELMKQ).

The protein resides in the membrane. This Dictyostelium discoideum (Social amoeba) protein is Tiger protein O1 (tgrO1).